A 367-amino-acid polypeptide reads, in one-letter code: MLRAASRAVGRAAVRSAQRSGTSVGRPLAMSRPPPPRAASGAPLRPATVLGTMEMGRRMDASASAASVRAFLERGHSELDTAFMYCDGQSENILGGLGLGLGSGDCTVKIATKANPWEGKSLKPDSIRSQLETSLKRLQCPRVDLFYLHAPDHSTPVEETLRACHQLHQEGKFVELGLSNYASWEVAEICTLCKSNGWILPTVYQGMYNATTRQVEAELLPCLRHFGLRFYAYNPLAGGLLTGKYKYEDKDGKQPVGRFFGNNWAETYRNRFWKEHHFEAIALVEKALQTTYGTNAPRMTSAALRWMYHHSQLQGTRGDAVILGMSSLEQLEQNLAATEEGPLEPAVVEAFDQAWNMVAHECPNYFR.

The span at Met-1–Ser-31 shows a compositional bias: low complexity. A disordered region spans residues Met-1–Arg-45. A mitochondrion-targeting transit peptide spans Met-1 to Pro-46. Ser-40 carries the post-translational modification Phosphoserine. Thr-48 is subject to Phosphothreonine. Asp-80 is a binding site for NADP(+). The active-site Proton donor is the Tyr-85. N6-acetyllysine is present on Lys-136. His-149 is a substrate binding site. NADP(+)-binding positions include Ser-179–Asn-180, Gln-205, Asn-234–Lys-244, and Arg-258. Position 244 is an N6-succinyllysine (Lys-244). Substrate contacts are provided by Tyr-268 and Arg-271. Position 326 to 334 (Ser-326 to Asn-334) interacts with NADP(+). Residue Arg-367 participates in substrate binding.

Belongs to the aldo/keto reductase family. Aldo/keto reductase 2 subfamily. In terms of assembly, homodimer. In terms of tissue distribution, expressed in liver, kidney, testis and brain with low levels in skeletal muscle, spleen, heart and lung.

It is found in the mitochondrion. Its subcellular location is the golgi apparatus. The protein resides in the cytoplasm. The catalysed reaction is 4-hydroxybutanoate + NADP(+) = succinate semialdehyde + NADPH + H(+). With respect to regulation, inhibited by citrate, succinate and tartrate. Functionally, catalyzes the NADPH-dependent reduction of succinic semialdehyde to gamma-hydroxybutyrate. May have an important role in producing the neuromodulator gamma-hydroxybutyrate (GHB). Has broad substrate specificity. Can reduce the dialdehyde protein-binding form of aflatoxin B1 (AFB1) to the non-binding AFB1 dialcohol. May be involved in protection of liver against the toxic and carcinogenic effects of AFB1, a potent hepatocarcinogen. This chain is Aflatoxin B1 aldehyde reductase member 2, found in Mus musculus (Mouse).